We begin with the raw amino-acid sequence, 240 residues long: Aspartate/glutamate leucyltransferase (240 aa).

Belongs to the R-transferase family. Bpt subfamily.

The protein localises to the cytoplasm. The catalysed reaction is N-terminal L-glutamyl-[protein] + L-leucyl-tRNA(Leu) = N-terminal L-leucyl-L-glutamyl-[protein] + tRNA(Leu) + H(+). It carries out the reaction N-terminal L-aspartyl-[protein] + L-leucyl-tRNA(Leu) = N-terminal L-leucyl-L-aspartyl-[protein] + tRNA(Leu) + H(+). Functions in the N-end rule pathway of protein degradation where it conjugates Leu from its aminoacyl-tRNA to the N-termini of proteins containing an N-terminal aspartate or glutamate. This Gluconobacter oxydans (strain 621H) (Gluconobacter suboxydans) protein is Aspartate/glutamate leucyltransferase.